The sequence spans 102 residues: Small ribosomal subunit protein uS10 (102 aa).

Belongs to the universal ribosomal protein uS10 family. As to quaternary structure, part of the 30S ribosomal subunit.

Functionally, involved in the binding of tRNA to the ribosomes. The sequence is that of Small ribosomal subunit protein uS10 from Bifidobacterium longum (strain DJO10A).